Reading from the N-terminus, the 806-residue chain is DEP domain-containing protein 1A (806 aa).

The region spanning 24-108 (FRAAMPLRKH…DNNSLYRFPS (85 aa)) is the DEP domain. The segment at 142 to 177 (QFSKKTPKRRASVDSKEEQENEDLMEDQRNDDDFPK) is disordered. Basic and acidic residues predominate over residues 167 to 177 (EDQRNDDDFPK). Residues 279 to 319 (DYFLNLPEPLLTFEFYELFVNILVVCGYITVPNSHNGKHRF) enclose the Rho-GAP domain. The segment at 564–588 (SHSSFPSTSSLLPPTTSPNSTGSES) is disordered.

This is DEP domain-containing protein 1A (depdc1a) from Xenopus laevis (African clawed frog).